A 254-amino-acid polypeptide reads, in one-letter code: Protein N-terminal and lysine N-methyltransferase EFM7 (254 aa).

Residues tryptophan 57, 84-86, aspartate 106, tryptophan 138, and serine 165 each bind S-adenosyl-L-methionine; that span reads GAA.

It belongs to the class I-like SAM-binding methyltransferase superfamily. EFM7 family.

It is found in the cytoplasm. Functionally, S-adenosyl-L-methionine-dependent protein methyltransferase that trimethylates the N-terminal glycine 'Gly-2' of elongation factor 1-alpha, before also catalyzing the mono- and dimethylation of 'Lys-3'. This chain is Protein N-terminal and lysine N-methyltransferase EFM7, found in Debaryomyces hansenii (strain ATCC 36239 / CBS 767 / BCRC 21394 / JCM 1990 / NBRC 0083 / IGC 2968) (Yeast).